We begin with the raw amino-acid sequence, 269 residues long: Hydroxyethylthiazole kinase (269 aa).

M41 contacts substrate. Residues R117 and S165 each coordinate ATP. G192 lines the substrate pocket.

This sequence belongs to the Thz kinase family. It depends on Mg(2+) as a cofactor.

The enzyme catalyses 5-(2-hydroxyethyl)-4-methylthiazole + ATP = 4-methyl-5-(2-phosphooxyethyl)-thiazole + ADP + H(+). The protein operates within cofactor biosynthesis; thiamine diphosphate biosynthesis; 4-methyl-5-(2-phosphoethyl)-thiazole from 5-(2-hydroxyethyl)-4-methylthiazole: step 1/1. Functionally, catalyzes the phosphorylation of the hydroxyl group of 4-methyl-5-beta-hydroxyethylthiazole (THZ). This is Hydroxyethylthiazole kinase from Actinobacillus succinogenes (strain ATCC 55618 / DSM 22257 / CCUG 43843 / 130Z).